The primary structure comprises 933 residues: DNA replication licensing factor MCM4 (933 aa).

Disordered regions lie at residues 1-149 (MSQQ…PRRI) and 154-173 (TRSG…PSEA). The span at 27–42 (PPQLSSPALFYSSSSS) shows a compositional bias: low complexity. Polar residues-rich tracts occupy residues 49-59 (RNNSQNLSQGE) and 69-85 (SPLN…SDVF). 3 positions are modified to phosphoserine: Ser-52, Ser-56, and Ser-69. Residues 86-103 (QSQGRQGRIRSSASASGR) are compositionally biased toward low complexity. Residues 117–129 (PTSSSSLGRNGQN) are compositionally biased toward polar residues. Low complexity predominate over residues 164–173 (SSSSAPPSEA). The region spanning 518–725 (LYSLLARSIA…NDRELAKHLT (208 aa)) is the MCM domain. 568–575 (GDPSTSKS) is a binding site for ATP. Positions 700 to 703 (SRFD) match the Arginine finger motif.

This sequence belongs to the MCM family. In terms of assembly, component of the MCM2-7 complex. The complex forms a toroidal hexameric ring with the proposed subunit order MCM2-MCM6-MCM4-MCM7-MCM3-MCM5; loaded onto DNA, forms a head-head double hexamer.

Its subcellular location is the nucleus. It carries out the reaction ATP + H2O = ADP + phosphate + H(+). In terms of biological role, acts as a component of the MCM2-7 complex (MCM complex) which is the putative replicative helicase essential for 'once per cell cycle' DNA replication initiation and elongation in eukaryotic cells. The active ATPase sites in the MCM2-7 ring are formed through the interaction surfaces of two neighboring subunits such that a critical structure of a conserved arginine finger motif is provided in trans relative to the ATP-binding site of the Walker A box of the adjacent subunit. The six ATPase active sites, however, are likely to contribute differentially to the complex helicase activity. Once loaded onto DNA, double hexamers can slide on dsDNA in the absence of ATPase activity. Required for S phase execution. The chain is DNA replication licensing factor MCM4 (MCM4) from Saccharomyces cerevisiae (strain ATCC 204508 / S288c) (Baker's yeast).